Consider the following 463-residue polypeptide: ATP synthase subunit beta (463 aa).

152-159 (GGAGVGKT) lines the ATP pocket.

Belongs to the ATPase alpha/beta chains family. In terms of assembly, F-type ATPases have 2 components, CF(1) - the catalytic core - and CF(0) - the membrane proton channel. CF(1) has five subunits: alpha(3), beta(3), gamma(1), delta(1), epsilon(1). CF(0) has three main subunits: a(1), b(2) and c(9-12). The alpha and beta chains form an alternating ring which encloses part of the gamma chain. CF(1) is attached to CF(0) by a central stalk formed by the gamma and epsilon chains, while a peripheral stalk is formed by the delta and b chains.

It is found in the cell inner membrane. The enzyme catalyses ATP + H2O + 4 H(+)(in) = ADP + phosphate + 5 H(+)(out). In terms of biological role, produces ATP from ADP in the presence of a proton gradient across the membrane. The catalytic sites are hosted primarily by the beta subunits. The chain is ATP synthase subunit beta from Shewanella oneidensis (strain ATCC 700550 / JCM 31522 / CIP 106686 / LMG 19005 / NCIMB 14063 / MR-1).